The primary structure comprises 865 residues: DNA mismatch repair protein MutS (865 aa).

609-616 (GPNMAGKS) contributes to the ATP binding site.

Belongs to the DNA mismatch repair MutS family.

Its function is as follows. This protein is involved in the repair of mismatches in DNA. It is possible that it carries out the mismatch recognition step. This protein has a weak ATPase activity. This Leuconostoc citreum (strain KM20) protein is DNA mismatch repair protein MutS.